Here is a 344-residue protein sequence, read N- to C-terminus: GTP 3',8-cyclase (344 aa).

In terms of domain architecture, Radical SAM core spans 19-244 (PFARPITYLR…TPLAERTGGP (226 aa)). GTP is bound at residue R28. [4Fe-4S] cluster contacts are provided by C35 and C39. Y41 lines the S-adenosyl-L-methionine pocket. Residue C42 coordinates [4Fe-4S] cluster. R77 is a GTP binding site. G81 is an S-adenosyl-L-methionine binding site. T110 serves as a coordination point for GTP. An S-adenosyl-L-methionine-binding site is contributed by S134. K170 lines the GTP pocket. M204 provides a ligand contact to S-adenosyl-L-methionine. [4Fe-4S] cluster contacts are provided by C268 and C271. 273–275 (RVR) lines the GTP pocket. [4Fe-4S] cluster is bound at residue C285.

Belongs to the radical SAM superfamily. MoaA family. In terms of assembly, monomer and homodimer. It depends on [4Fe-4S] cluster as a cofactor.

It carries out the reaction GTP + AH2 + S-adenosyl-L-methionine = (8S)-3',8-cyclo-7,8-dihydroguanosine 5'-triphosphate + 5'-deoxyadenosine + L-methionine + A + H(+). The protein operates within cofactor biosynthesis; molybdopterin biosynthesis. In terms of biological role, catalyzes the cyclization of GTP to (8S)-3',8-cyclo-7,8-dihydroguanosine 5'-triphosphate. The polypeptide is GTP 3',8-cyclase (Paracoccus denitrificans (strain Pd 1222)).